Here is a 403-residue protein sequence, read N- to C-terminus: Flavohemoprotein (403 aa).

A Globin domain is found at 1 to 138 (MLTQKTKDIV…LADVLMGMES (138 aa)). His85 contacts heme b. Catalysis depends on charge relay system residues Tyr95 and Glu137. Positions 149–403 (GGWKGWRTFV…EVFGPDLFAE (255 aa)) are reductase. One can recognise an FAD-binding FR-type domain in the interval 152–262 (KGWRTFVIRE…AAPYGSFHID (111 aa)). FAD-binding positions include Tyr190 and 206 to 209 (RQYS). 275–280 (GVGLTP) contributes to the NADP(+) binding site. 395-398 (VFGP) lines the FAD pocket.

Belongs to the globin family. Two-domain flavohemoproteins subfamily. The protein in the C-terminal section; belongs to the flavoprotein pyridine nucleotide cytochrome reductase family. Monomer. Requires FAD as cofactor. It depends on heme b as a cofactor.

It localises to the cytoplasm. The enzyme catalyses 2 nitric oxide + NADPH + 2 O2 = 2 nitrate + NADP(+) + H(+). It catalyses the reaction 2 nitric oxide + NADH + 2 O2 = 2 nitrate + NAD(+) + H(+). Is involved in NO detoxification in an aerobic process, termed nitric oxide dioxygenase (NOD) reaction that utilizes O(2) and NAD(P)H to convert NO to nitrate, which protects the bacterium from various noxious nitrogen compounds. Therefore, plays a central role in the inducible response to nitrosative stress. Functionally, in the presence of oxygen and NADH, FHP has NADH oxidase activity, which leads to the generation of superoxide and H(2)O(2), both in vitro and in vivo, and it has been suggested that FHP might act as an amplifier of superoxide stress. Under anaerobic conditions, FHP also exhibits nitric oxide reductase and FAD reductase activities. However, all these reactions are much lower than NOD activity. In Cupriavidus necator (strain ATCC 17699 / DSM 428 / KCTC 22496 / NCIMB 10442 / H16 / Stanier 337) (Ralstonia eutropha), this protein is Flavohemoprotein (hmp).